The sequence spans 125 residues: Small ribosomal subunit protein uS13 (125 aa).

The interval 97–125 is disordered; the sequence is PLRGQRTKTNARTRKGKRKTVANKKMASK.

It belongs to the universal ribosomal protein uS13 family. Part of the 30S ribosomal subunit. Forms a loose heterodimer with protein S19. Forms two bridges to the 50S subunit in the 70S ribosome.

In terms of biological role, located at the top of the head of the 30S subunit, it contacts several helices of the 16S rRNA. In the 70S ribosome it contacts the 23S rRNA (bridge B1a) and protein L5 of the 50S subunit (bridge B1b), connecting the 2 subunits; these bridges are implicated in subunit movement. Contacts the tRNAs in the A and P-sites. The polypeptide is Small ribosomal subunit protein uS13 (Borrelia hermsii (strain HS1 / DAH)).